The sequence spans 208 residues: Small ribosomal subunit protein uS5 (208 aa).

Positions 1 to 19 (MTDSNNQSPNKKTSGSSGA) are enriched in polar residues. The tract at residues 1–54 (MTDSNNQSPNKKTSGSSGAPTAADGRQENRRSRGEKRGGRRDRRGQERDSEWQE) is disordered. Composition is skewed to basic and acidic residues over residues 25–37 (GRQENRRSRGEKR) and 44–54 (RGQERDSEWQE). The S5 DRBM domain maps to 52-115 (WQERVVQIRR…ADGKKHLVRV (64 aa)).

The protein belongs to the universal ribosomal protein uS5 family. Part of the 30S ribosomal subunit. Contacts proteins S4 and S8.

Functionally, with S4 and S12 plays an important role in translational accuracy. Its function is as follows. Located at the back of the 30S subunit body where it stabilizes the conformation of the head with respect to the body. This Prochlorococcus marinus (strain NATL1A) protein is Small ribosomal subunit protein uS5.